The primary structure comprises 787 residues: Probable phosphoketolase (787 aa).

This sequence belongs to the XFP family. Thiamine diphosphate is required as a cofactor.

The polypeptide is Probable phosphoketolase (Pediococcus pentosaceus (strain ATCC 25745 / CCUG 21536 / LMG 10740 / 183-1w)).